The sequence spans 861 residues: Translation initiation factor IF-2 (861 aa).

The segment at 107–272 (AQKQQDIQRA…QRKKKSKVVQ (166 aa)) is disordered. Positions 115 to 128 (RAAEEAAAKERETE) are enriched in basic and acidic residues. 2 stretches are compositionally biased toward polar residues: residues 148–158 (SVQQEAANMDT) and 169–180 (VDESVSATTAGG). Residues 210-228 (NKEDSEVRREPADAEDLKR) show a composition bias toward basic and acidic residues. Over residues 260-269 (RARQRKKKSK) the composition is skewed to basic residues. The region spanning 362–531 (SRAPVVSVMG…LLQSEMLELT (170 aa)) is the tr-type G domain. Residues 371–378 (GHVDHGKT) are G1. Position 371–378 (371–378 (GHVDHGKT)) interacts with GTP. Residues 396-400 (GITQH) are G2. Positions 417 to 420 (DTPG) are G3. GTP-binding positions include 417–421 (DTPGH) and 471–474 (NKMD). The segment at 471–474 (NKMD) is G4. Residues 507–509 (SAH) are G5.

It belongs to the TRAFAC class translation factor GTPase superfamily. Classic translation factor GTPase family. IF-2 subfamily.

The protein localises to the cytoplasm. One of the essential components for the initiation of protein synthesis. Protects formylmethionyl-tRNA from spontaneous hydrolysis and promotes its binding to the 30S ribosomal subunits. Also involved in the hydrolysis of GTP during the formation of the 70S ribosomal complex. This chain is Translation initiation factor IF-2, found in Hahella chejuensis (strain KCTC 2396).